The chain runs to 200 residues: Adenylate kinase (200 aa).

10 to 15 (GAGKGT) lines the ATP pocket. An NMP region spans residues 30–59 (STGDMLRAAVAAETPVGLEAKAIMESGGLV). AMP-binding positions include T31, R36, 57–59 (GLV), 85–88 (GFPR), and Q92. The interval 126–142 (KRAEETAARGQPVRKDD) is LID. R127 contacts ATP. Residues R139 and R150 each contribute to the AMP site. K178 serves as a coordination point for ATP.

It belongs to the adenylate kinase family. Monomer.

The protein resides in the cytoplasm. It catalyses the reaction AMP + ATP = 2 ADP. The protein operates within purine metabolism; AMP biosynthesis via salvage pathway; AMP from ADP: step 1/1. Its function is as follows. Catalyzes the reversible transfer of the terminal phosphate group between ATP and AMP. Plays an important role in cellular energy homeostasis and in adenine nucleotide metabolism. The polypeptide is Adenylate kinase (Methylorubrum extorquens (strain PA1) (Methylobacterium extorquens)).